The chain runs to 262 residues: Hydroxyethylthiazole kinase (262 aa).

Met50 is a substrate binding site. The ATP site is built by Arg125 and Thr171. Gly198 contributes to the substrate binding site.

Belongs to the Thz kinase family. It depends on Mg(2+) as a cofactor.

The enzyme catalyses 5-(2-hydroxyethyl)-4-methylthiazole + ATP = 4-methyl-5-(2-phosphooxyethyl)-thiazole + ADP + H(+). The protein operates within cofactor biosynthesis; thiamine diphosphate biosynthesis; 4-methyl-5-(2-phosphoethyl)-thiazole from 5-(2-hydroxyethyl)-4-methylthiazole: step 1/1. Catalyzes the phosphorylation of the hydroxyl group of 4-methyl-5-beta-hydroxyethylthiazole (THZ). The protein is Hydroxyethylthiazole kinase of Shigella boydii serotype 4 (strain Sb227).